Consider the following 278-residue polypeptide: Malonyl-[acyl-carrier protein] O-methyltransferase (278 aa).

Belongs to the methyltransferase superfamily.

The catalysed reaction is malonyl-[ACP] + S-adenosyl-L-methionine = malonyl-[ACP] methyl ester + S-adenosyl-L-homocysteine. It participates in cofactor biosynthesis; biotin biosynthesis. Functionally, converts the free carboxyl group of a malonyl-thioester to its methyl ester by transfer of a methyl group from S-adenosyl-L-methionine (SAM). It allows to synthesize pimeloyl-ACP via the fatty acid synthetic pathway. This is Malonyl-[acyl-carrier protein] O-methyltransferase from Brevibacillus brevis (strain 47 / JCM 6285 / NBRC 100599).